Reading from the N-terminus, the 796-residue chain is Protein SEY1 homolog (796 aa).

At 1 to 701 (MESSNDFSNK…AGTSISSWRN (701 aa)) the chain is on the cytoplasmic side. The region spanning 46–280 (GFRFNVVTIL…VPSDGFFVYS (235 aa)) is the GB1/RHD3-type G domain. 56–63 (GSQSSGKS) contacts GTP. The stretch at 554–626 (SLVLLLKAAR…DALTLLKVLK (73 aa)) forms a coiled coil. A helical transmembrane segment spans residues 702–722 (IPPIFWLVLLVLGWNELRSVF). The Lumenal portion of the chain corresponds to 723-725 (KVL). Residues 726–746 (LRFYVVIPLLIVFYFTFSYSA) traverse the membrane as a helical segment. Residues 747–796 (TKLLGPKADQYVKPVRDKVLSLFTALLAWFVRTLHMIASKSSSFKQRPAT) lie on the Cytoplasmic side of the membrane.

This sequence belongs to the TRAFAC class dynamin-like GTPase superfamily. GB1/RHD3 GTPase family. RHD3 subfamily.

The protein localises to the endoplasmic reticulum membrane. In terms of biological role, probable GTP-binding protein that may be involved in cell development. This chain is Protein SEY1 homolog, found in Theileria parva (East coast fever infection agent).